Consider the following 826-residue polypeptide: Protein lozenge (826 aa).

3 disordered regions span residues 1 to 45 (MHLH…ASQT), 87 to 171 (PVSV…WSSS), and 214 to 263 (ASVG…NNNN). Over residues 12 to 24 (PPSPSPNPTPTPS) the composition is skewed to pro residues. Residues 106–141 (SHHHHHLHHHYSPYHHAHPYHPPHPHAPHHHHHHHP) show a composition bias toward basic residues. The segment covering 142–153 (PYPYPPAGPHPP) has biased composition (pro residues). The segment covering 156 to 171 (VTSSSTSPTGNGWSSS) has biased composition (polar residues). The region spanning 275–403 (LVQKRQQEHP…TVDGPREPRS (129 aa)) is the Runt domain. The segment covering 774 to 798 (QQQQQQQQQQQQVHHPQQQQVESAG) has biased composition (low complexity). The interval 774-826 (QQQQQQQQQQQQVHHPQQQQVESAGEVGGSGAGGVESAREEDVGDLSQVWRPY) is disordered.

Expressed in the pupal eye during programmed cell death.

It is found in the nucleus. In terms of biological role, involved in prepatterning photoreceptor precursors in the developing eye; in the larval eye disk it defines a subset of cells as an equipotential group that is competent to respond to the sevenless developmental signal and another subset that confer proper photoreceptor identity by positively regulating the homeo box gene Bar. Involved in the aop/pnt dynamic in a Ras-dependent manner to regulate pros expression. Promotes apoptosis in the pupal eye by directly activating aos and klu. Also modulates hid- and rpr-mediated cell death. Regulates amos function in olfactory sensilla development. The chain is Protein lozenge (lz) from Drosophila melanogaster (Fruit fly).